Consider the following 333-residue polypeptide: Dihydroorotate dehydrogenase (quinone) (333 aa).

Residues 56 to 60 (AGLDK) and T80 contribute to the FMN site. A substrate-binding site is contributed by K60. 105–109 (NRMGF) lines the substrate pocket. FMN is bound by residues N133 and N166. Residue N166 coordinates substrate. Catalysis depends on S169, which acts as the Nucleophile. N171 serves as a coordination point for substrate. FMN is bound by residues K211 and T239. A substrate-binding site is contributed by 240-241 (NT). FMN-binding positions include G262, G291, and 312 to 313 (YS).

It belongs to the dihydroorotate dehydrogenase family. Type 2 subfamily. As to quaternary structure, monomer. FMN serves as cofactor.

Its subcellular location is the cell membrane. It catalyses the reaction (S)-dihydroorotate + a quinone = orotate + a quinol. It functions in the pathway pyrimidine metabolism; UMP biosynthesis via de novo pathway; orotate from (S)-dihydroorotate (quinone route): step 1/1. Its function is as follows. Catalyzes the conversion of dihydroorotate to orotate with quinone as electron acceptor. This chain is Dihydroorotate dehydrogenase (quinone), found in Legionella pneumophila (strain Corby).